The sequence spans 63 residues: ATPase inhibitor, mitochondrial (63 aa).

Positions 1 to 23 (TAGATGATRQDGSTDAFEKREKA) are disordered. Residues 18 to 62 (EKREKAQEDLYIRQHEKEQLEALKESLKKQKKSLDDLEBKIDDLT) adopt a coiled-coil conformation.

Belongs to the ATPase inhibitor family.

Its subcellular location is the mitochondrion. This protein forms a one-to-one complex with ATPase to inhibit the enzyme activity completely. The sequence is that of ATPase inhibitor, mitochondrial from Cyberlindnera jadinii (Torula yeast).